The chain runs to 330 residues: Transcription factor zip1 (330 aa).

A compositionally biased stretch (basic and acidic residues) spans 133-148; that stretch reads SKETQEKTSSQRELFE. Disordered stretches follow at residues 133–165 and 238–277; these read SKETQEKTSSQRELFEQKSSVASASKDNVSSSS and PSLSSYKGAQSPNANSKRTKATSAIRTAAEEDKRRRNTAA. Residues 150–165 are compositionally biased toward low complexity; sequence KSSVASASKDNVSSSS. The span at 244-262 shows a compositional bias: polar residues; that stretch reads KGAQSPNANSKRTKATSAI. Residues 264–327 enclose the bZIP domain; sequence TAAEEDKRRR…NWLKGLIRPT (64 aa). Positions 270–288 are basic motif; it reads KRRRNTAASARFRIKKKLK. The segment at 292–320 is leucine-zipper; sequence LERTAKELTEKVAILETRVRELEMENNWL.

Belongs to the bZIP family. As to quaternary structure, interacts with pof1.

Its subcellular location is the nucleus. In terms of biological role, mediates cell growth arrest in response to cadmium exposure, which is essential to maintain cell viability. Regulates cadmium stress specific genes. The polypeptide is Transcription factor zip1 (zip1) (Schizosaccharomyces pombe (strain 972 / ATCC 24843) (Fission yeast)).